Reading from the N-terminus, the 616-residue chain is Electron transfer flavoprotein-ubiquinone oxidoreductase, mitochondrial (616 aa).

A mitochondrion-targeting transit peptide spans Met1–Cys32. An FAD-binding site is contributed by Val70–Ile84. Lys95 is subject to N6-acetyllysine. The stretch at Ile108–Asp129 is an intramembrane region. Lys131 and Lys222 each carry N6-acetyllysine. Residues Gly304 and Gly305 each coordinate a ubiquinone. Residues Lys356 and Lys415 each carry the N6-acetyllysine modification. Residues Ala427–Glu446 lie within the membrane without spanning it. At Ser550 the chain carries Phosphoserine. Cys560, Cys585, Cys588, and Cys591 together coordinate [4Fe-4S] cluster. A 4Fe-4S ferredoxin-type domain is found at Phe576 to Pro605.

This sequence belongs to the ETF-QO/FixC family. Monomer. Requires [4Fe-4S] cluster as cofactor. The cofactor is FAD.

The protein localises to the mitochondrion inner membrane. It carries out the reaction a ubiquinone + reduced [electron-transfer flavoprotein] = a ubiquinol + oxidized [electron-transfer flavoprotein] + H(+). Accepts electrons from ETF and reduces ubiquinone. The protein is Electron transfer flavoprotein-ubiquinone oxidoreductase, mitochondrial (Etfdh) of Rattus norvegicus (Rat).